Here is a 199-residue protein sequence, read N- to C-terminus: Imidazoleglycerol-phosphate dehydratase (199 aa).

This sequence belongs to the imidazoleglycerol-phosphate dehydratase family.

It is found in the cytoplasm. The catalysed reaction is D-erythro-1-(imidazol-4-yl)glycerol 3-phosphate = 3-(imidazol-4-yl)-2-oxopropyl phosphate + H2O. It functions in the pathway amino-acid biosynthesis; L-histidine biosynthesis; L-histidine from 5-phospho-alpha-D-ribose 1-diphosphate: step 6/9. In Paramagnetospirillum magneticum (strain ATCC 700264 / AMB-1) (Magnetospirillum magneticum), this protein is Imidazoleglycerol-phosphate dehydratase.